We begin with the raw amino-acid sequence, 1133 residues long: Early transcription factor large subunit homolog (1133 aa).

One can recognise a Helicase ATP-binding domain in the interval 52–352; that stretch reads KGGRAFFPCD…PNGQPLQRQQ (301 aa). 99–106 contacts ATP; it reads WQTGTGKS. Residues 281–284 carry the DEAH box motif; that stretch reads DEIH. The 201-residue stretch at 524–724 folds into the Helicase C-terminal domain; that stretch reads MMKDILSIIR…EGDKALRKHA (201 aa).

Belongs to the DEAD box helicase family. DEAH subfamily.

It is found in the virion. The catalysed reaction is ATP + H2O = ADP + phosphate + H(+). Its function is as follows. Putative initation factor. In Ornithodoros (relapsing fever ticks), this protein is Early transcription factor large subunit homolog.